We begin with the raw amino-acid sequence, 478 residues long: Proton-coupled amino acid transporter 2 (478 aa).

Composition is skewed to polar residues over residues 1–14 (MSVT…QVAT) and 26–37 (KLQSQDPSPANG). A disordered region spans residues 1–46 (MSVTKSARSPQVATPLNLDLPESAKKLQSQDPSPANGSSSESSKKT). The Cytoplasmic segment spans residues 1–53 (MSVTKSARSPQVATPLNLDLPESAKKLQSQDPSPANGSSSESSKKTKGITGFQ). A helical transmembrane segment spans residues 54–74 (TLVHLVKGNMGTGILGLPLAV). Residues 75–76 (KN) lie on the Extracellular side of the membrane. The helical transmembrane segment at 77–97 (AGILMGPLSLLVMGLIACHCM) threads the bilayer. At 98–143 (HILVRCAQRFCHRLNKPFMDYGDTVMHGLAFSPNAWLQNHAHWGRR) the chain is on the cytoplasmic side. Residues 144–164 (VVSFFLIVTQLGFCCVYIVFL) traverse the membrane as a helical segment. Residues 165–192 (ADNLKQVVEAVNSTTISCHKNETVVLTP) lie on the Extracellular side of the membrane. Residues 193-213 (TMDSRLYMLSFLPVLGLLVFV) traverse the membrane as a helical segment. The Cytoplasmic segment spans residues 214 to 217 (RNLR). The helical transmembrane segment at 218–238 (VLTIFSLLANISMLVSLVIIA) threads the bilayer. Residues 239–259 (QYIIQEIPDASQLPLVASWKT) are Extracellular-facing. The helical transmembrane segment at 260–280 (YPLFFGTAIFSFESIGVVLPL) threads the bilayer. At 281 to 292 (ENKMKDARGFPT) the chain is on the cytoplasmic side. A helical transmembrane segment spans residues 293-313 (ILSLGMSIITTLYIAIGALGY). Topologically, residues 314–340 (LRFGDDIKASITLNLPNCWLYQSVKLL) are extracellular. The chain crosses the membrane as a helical span at residues 341–361 (YVVGILCTYALQFYVPAEIII). Residues 362 to 374 (PLAVSQVSKRWAL) lie on the Cytoplasmic side of the membrane. The helical transmembrane segment at 375–395 (PVDLSIRLALVCLTCMLAILI) threads the bilayer. Over 396–399 (PRLD) the chain is Extracellular. The chain crosses the membrane as a helical span at residues 400-420 (LVLSLVGSVSSSALALIIPPL). At 421-441 (LEVVTYYGEGISPLTVTKDAL) the chain is on the cytoplasmic side. Residues 442-462 (ISILGFMGFVVGTYQALDELI) traverse the membrane as a helical segment. Residues 463–478 (KSGNSPALSNSTMFIQ) are Extracellular-facing.

It belongs to the amino acid/polyamine transporter 2 family. As to expression, expressed in spinal cord, brain, testis, lung, heart, colon, spleen, kidney and muscle. Found in neuronal cell bodies in the anterior horn, in spinal cord brain stem, cerebellum, hippocampus, hypothalamus, rhinencephalon, cerebral cortex, and olfactory bulb in the brain. Also expressed in bone and fat tissues.

The protein resides in the cell membrane. It is found in the endoplasmic reticulum membrane. It localises to the recycling endosome membrane. It carries out the reaction glycine(in) + H(+)(in) = glycine(out) + H(+)(out). The enzyme catalyses L-alanine(in) + H(+)(in) = L-alanine(out) + H(+)(out). It catalyses the reaction D-alanine(in) + H(+)(in) = D-alanine(out) + H(+)(out). The catalysed reaction is L-proline(out) + H(+)(out) = L-proline(in) + H(+)(in). It carries out the reaction D-proline(out) + H(+)(out) = D-proline(in) + H(+)(in). The enzyme catalyses 4-hydroxy-L-proline(in) + H(+)(in) = 4-hydroxy-L-proline(out) + H(+)(out). It catalyses the reaction L-serine(in) + H(+)(in) = L-serine(out) + H(+)(out). The catalysed reaction is D-serine(out) + H(+)(out) = D-serine(in) + H(+)(in). It carries out the reaction beta-alanine(in) + H(+)(in) = beta-alanine(out) + H(+)(out). The enzyme catalyses 4-aminobutanoate(in) + H(+)(in) = 4-aminobutanoate(out) + H(+)(out). It catalyses the reaction sarcosine(in) + H(+)(in) = sarcosine(out) + H(+)(out). The catalysed reaction is N,N-dimethylglycine(in) + H(+)(in) = N,N-dimethylglycine(out) + H(+)(out). Its function is as follows. Electrogenic proton/amino acid symporter with a high selectivity for the small side chains amino acids glycine, alanine and proline, where both L- and D-enantiomers are transported. Extension of the backbone length, as in beta-alanine and 4-aminobutanoate or methylation of the amino group, as in sarcosine and N,N-dimethylglycine, are also tolerated but decrease transport efficiency. A free carboxyl group is preferred. The polypeptide is Proton-coupled amino acid transporter 2 (Mus musculus (Mouse)).